The sequence spans 24 residues: Grammistin Pp 4b (24 aa).

Exists as aggregates of 3-4 molecules. In terms of tissue distribution, expressed by the skin glands.

It is found in the secreted. In terms of biological role, thanks to its abundant amphiphilic alpha-helices, it may integrate into membrane phospholipids, leading to lysis of the membrane. Its hemolytic activity is inhibited by phospholipids, but not by cholesterol. Has antibacterial activity with a broad spectrum against various species of bacteria including both Gram-positive and Gram-negative groups. Also has ichthyotoxic activity. In Pogonoperca punctata (Clown grouper), this protein is Grammistin Pp 4b.